The primary structure comprises 375 residues: 23S rRNA (uracil(747)-C(5))-methyltransferase RlmC (375 aa).

[4Fe-4S] cluster contacts are provided by C3, C11, C14, and C87. S-adenosyl-L-methionine is bound by residues Q212, F241, E262, and N307. Catalysis depends on C334, which acts as the Nucleophile.

This sequence belongs to the class I-like SAM-binding methyltransferase superfamily. RNA M5U methyltransferase family. RlmC subfamily.

It carries out the reaction uridine(747) in 23S rRNA + S-adenosyl-L-methionine = 5-methyluridine(747) in 23S rRNA + S-adenosyl-L-homocysteine + H(+). Catalyzes the formation of 5-methyl-uridine at position 747 (m5U747) in 23S rRNA. In Shigella boydii serotype 4 (strain Sb227), this protein is 23S rRNA (uracil(747)-C(5))-methyltransferase RlmC.